The sequence spans 696 residues: L-amino-acid oxidase (696 aa).

Residues M1–R130 constitute a propeptide that is removed on maturation. Residues E207, R215, M236–R237, and V440 contribute to the FAD site. Residue R237 coordinates substrate. Residue Y564 coordinates substrate. FAD-binding positions include E649 and I658 to A661.

It belongs to the flavin monoamine oxidase family. FAD serves as cofactor.

It catalyses the reaction an L-alpha-amino acid + O2 + H2O = a 2-oxocarboxylate + H2O2 + NH4(+). The chain is L-amino-acid oxidase (lox) from Neurospora crassa (strain ATCC 24698 / 74-OR23-1A / CBS 708.71 / DSM 1257 / FGSC 987).